A 261-amino-acid chain; its full sequence is tRNA (guanine-N(1)-)-methyltransferase (261 aa).

S-adenosyl-L-methionine is bound by residues Gly-113 and 133–138 (IGDYVL).

The protein belongs to the RNA methyltransferase TrmD family. Homodimer.

Its subcellular location is the cytoplasm. It carries out the reaction guanosine(37) in tRNA + S-adenosyl-L-methionine = N(1)-methylguanosine(37) in tRNA + S-adenosyl-L-homocysteine + H(+). Functionally, specifically methylates guanosine-37 in various tRNAs. This is tRNA (guanine-N(1)-)-methyltransferase from Xylella fastidiosa (strain M23).